We begin with the raw amino-acid sequence, 66 residues long: Large ribosomal subunit protein eL29 (66 aa).

Positions 1–14 are enriched in polar residues; that stretch reads MAKSKNSTNKNQIS. A disordered region spans residues 1-66; the sequence is MAKSKNSTNK…KNLEKKVNKE (66 aa). Residues 15-31 are compositionally biased toward basic residues; sequence KSHRNGIKKPKDHRHIS. Residues 47–66 show a composition bias toward basic and acidic residues; it reads IKNDPSIKKSKNLEKKVNKE.

Belongs to the eukaryotic ribosomal protein eL29 family.

It is found in the cytoplasm. This Tetrahymena thermophila protein is Large ribosomal subunit protein eL29 (RPL29).